The following is a 478-amino-acid chain: Major facilitator superfamily domain-containing protein 12 (478 aa).

Position 1 is an N-acetylmethionine (Met-1). Topologically, residues 1-26 are cytoplasmic; it reads MVPGSPAAGAGPAPRALSLAARLSYA. The chain crosses the membrane as a helical span at residues 27–47; the sequence is VGHFLNDLCASMWFTYLLLYL. Topologically, residues 48–56 are lumenal; sequence HSVRAYSSR. A helical transmembrane segment spans residues 57-77; it reads GAGLLLLLGQVADGLCTPLVG. The Cytoplasmic portion of the chain corresponds to 78 to 97; that stretch reads YEADRAAGRCARCGPRKAWH. The helical transmembrane segment at 98–118 threads the bilayer; the sequence is LVGTVCVLLSFPFIFSPCLGC. Residues 119–124 are Lumenal-facing; the sequence is GAATPE. The chain crosses the membrane as a helical span at residues 125–145; it reads WAALLYYGPFIVVFQFGWAAT. Over 146–168 the chain is Cytoplasmic; it reads QIAHLSLIPELVTSDHEKVELTA. Residues 169–189 form a helical membrane-spanning segment; the sequence is LRYAFTVVANITVFGAAWLLL. Over 190–216 the chain is Lumenal; that stretch reads RLQGSAREGPPDEAGDHLGVQDVPVFR. A helical membrane pass occupies residues 217–237; the sequence is TLSLCVVGVGAVFSLLFHLGT. At 238–277 the chain is on the cytoplasmic side; the sequence is RERRRPPAQEPDERSPLLAPATARPLLLWKHWLREPSFYQ. A helical membrane pass occupies residues 278 to 300; sequence VGLLYMSTRLIVNLSQTYIAMYL. Over 301–308 the chain is Lumenal; sequence TYSLNLPK. Residues 309-329 form a helical membrane-spanning segment; that stretch reads KFIATIPLVMYVSGFCSSFLM. At 330 to 338 the chain is on the cytoplasmic side; that stretch reads KPVNKCIGR. A helical membrane pass occupies residues 339–359; that stretch reads NMTYFVGLLVILAFAAWVVLV. At 360-361 the chain is on the lumenal side; that stretch reads DE. The helical transmembrane segment at 362–382 threads the bilayer; sequence LGMAVYVAAVLLGGGCATILV. Residues 383-400 lie on the Cytoplasmic side of the membrane; that stretch reads TSLAMTADLIGPHTHSGA. Residues 401–421 traverse the membrane as a helical segment; sequence FVYGAMSFSDKVANGLAVMVI. The Lumenal portion of the chain corresponds to 422–436; it reads QSLHPCSLELCCRAC. The chain crosses the membrane as a helical span at residues 437 to 457; it reads VGFYHWVMVAVTGGVGVAATL. Topologically, residues 458 to 478 are cytoplasmic; that stretch reads SLCSLLVWPIRLRSWDPGAQP.

Belongs to the major facilitator superfamily.

It is found in the melanosome membrane. It localises to the lysosome membrane. It catalyses the reaction L-cysteine(in) = L-cysteine(out). Its function is as follows. Transporter that mediates the import of cysteine into melanosomes, thereby regulating skin/hair pigmentation. In melanosomes, cysteine import is required both for normal levels of cystine, the oxidized dimer of cysteine, and provide cysteine for the production of the cysteinyldopas used in pheomelanin synthesis, thereby regulating skin/hair pigmentation. Also catalyzes import of cysteine into lysosomes in non-pigmented cells, regulating lysosomal cystine and cysteine storage, which is essnetial for redox homeostasis. The protein is Major facilitator superfamily domain-containing protein 12 of Equus caballus (Horse).